Consider the following 235-residue polypeptide: uncharacterized protein (235 aa).

2 disordered regions span residues 1–36 (MGML…GRGS) and 213–235 (VKTR…ILEQ).

This is an uncharacterized protein from Homo sapiens (Human).